We begin with the raw amino-acid sequence, 491 residues long: Lysine--tRNA ligase (491 aa).

Glu-398 and Glu-405 together coordinate Mg(2+).

This sequence belongs to the class-II aminoacyl-tRNA synthetase family. Homodimer. It depends on Mg(2+) as a cofactor.

Its subcellular location is the cytoplasm. The enzyme catalyses tRNA(Lys) + L-lysine + ATP = L-lysyl-tRNA(Lys) + AMP + diphosphate. The sequence is that of Lysine--tRNA ligase from Mycoplasmopsis synoviae (strain 53) (Mycoplasma synoviae).